The primary structure comprises 439 residues: L-cysteine:1D-myo-inositol 2-amino-2-deoxy-alpha-D-glucopyranoside ligase 2 (439 aa).

Zn(2+) is bound at residue C60. L-cysteinyl-5'-AMP contacts are provided by residues 60 to 63, T75, and 98 to 100; these read CGIT and NVT. A 'HIGH' region motif is present at residues 62–72; the sequence is ITPYDSTHLGH. A 'ERGGDP' region motif is present at residues 203-208; the sequence is ERGGDP. W243 provides a ligand contact to L-cysteinyl-5'-AMP. C247 lines the Zn(2+) pocket. Residue 265 to 267 coordinates L-cysteinyl-5'-AMP; that stretch reads GVD. H272 provides a ligand contact to Zn(2+). Residue I299 coordinates L-cysteinyl-5'-AMP. A 'KMSKS' region motif is present at residues 305–309; it reads KMSKS.

Belongs to the class-I aminoacyl-tRNA synthetase family. MshC subfamily. As to quaternary structure, monomer. It depends on Zn(2+) as a cofactor.

It carries out the reaction 1D-myo-inositol 2-amino-2-deoxy-alpha-D-glucopyranoside + L-cysteine + ATP = 1D-myo-inositol 2-(L-cysteinylamino)-2-deoxy-alpha-D-glucopyranoside + AMP + diphosphate + H(+). Catalyzes the ATP-dependent condensation of GlcN-Ins and L-cysteine to form L-Cys-GlcN-Ins. The polypeptide is L-cysteine:1D-myo-inositol 2-amino-2-deoxy-alpha-D-glucopyranoside ligase 2 (Corynebacterium urealyticum (strain ATCC 43042 / DSM 7109)).